A 517-amino-acid polypeptide reads, in one-letter code: Crotonobetaine/carnitine--CoA ligase (517 aa).

It belongs to the ATP-dependent AMP-binding enzyme family.

It catalyses the reaction 4-(trimethylamino)butanoate + ATP + CoA = 4-(trimethylamino)butanoyl-CoA + AMP + diphosphate. The catalysed reaction is crotonobetaine + ATP + CoA = crotonobetainyl-CoA + AMP + diphosphate. The enzyme catalyses (R)-carnitine + ATP + CoA = (R)-carnitinyl-CoA + AMP + diphosphate. It participates in amine and polyamine metabolism; carnitine metabolism. Catalyzes the transfer of CoA to carnitine, generating the initial carnitinyl-CoA needed for the CaiB reaction cycle. Also has activity toward crotonobetaine and gamma-butyrobetaine. This Shigella sonnei (strain Ss046) protein is Crotonobetaine/carnitine--CoA ligase.